We begin with the raw amino-acid sequence, 695 residues long: Variediene synthase (695 aa).

The interval 1–23 is disordered; sequence MVPTSLSPDDTSDPVPRSSSDIQ. The terpene cyclase stretch occupies residues 7 to 332; that stretch reads SPDDTSDPVP…PRYHPWLCEE (326 aa). A Mg(2+)-binding site is contributed by aspartate 98. Substrate contacts are provided by residues aspartate 98, 184–187, asparagine 228, 232–236, and 324–325; these read RIID, SFDIE, and RY. Positions 98–102 match the DDXXD 1 motif; that stretch reads DNVVE. The NSE/DTE motif lies at 228–236; that stretch reads NDYFSFDIE. A disordered region spans residues 353–392; the sequence is RRSISGDSISSESSVWSGASDRSARSSVSSAPSLDEGKEP. Residues 357–385 show a composition bias toward low complexity; it reads SGDSISSESSVWSGASDRSARSSVSSAPS. Residues lysine 415, arginine 418, and histidine 447 each contribute to the isopentenyl diphosphate site. Mg(2+) is bound by residues aspartate 454 and aspartate 458. The DDXXD 2 signature appears at 454–458; sequence DDIED. Arginine 463 provides a ligand contact to dimethylallyl diphosphate. Residue arginine 464 participates in isopentenyl diphosphate binding. 6 residues coordinate dimethylallyl diphosphate: lysine 541, threonine 542, glutamine 579, asparagine 586, lysine 595, and lysine 605.

It in the N-terminal section; belongs to the terpene synthase family. In the C-terminal section; belongs to the FPP/GGPP synthase family. As to quaternary structure, hexamer. It depends on Mg(2+) as a cofactor.

The enzyme catalyses isopentenyl diphosphate + (2E,6E)-farnesyl diphosphate = (2E,6E,10E)-geranylgeranyl diphosphate + diphosphate. It catalyses the reaction (2E,6E,10E)-geranylgeranyl diphosphate = variediene + diphosphate. It participates in secondary metabolite biosynthesis; terpenoid biosynthesis. In terms of biological role, bifunctional terpene synthase converts DMAPP and IPP, and also GGPP, into variediene as a single product. The C-terminal prenyltransferase domain of AbVS catalyzes formation of GGPP, whereas the N-terminal terpene cyclase domain catalyzes the cyclization of GGPP to variediene. The polypeptide is Variediene synthase (Aspergillus brasiliensis (strain CBS 101740 / IMI 381727 / IBT 21946)).